Reading from the N-terminus, the 299-residue chain is ATP phosphoribosyltransferase (299 aa).

The protein belongs to the ATP phosphoribosyltransferase family. Long subfamily. It depends on Mg(2+) as a cofactor.

The protein localises to the cytoplasm. It carries out the reaction 1-(5-phospho-beta-D-ribosyl)-ATP + diphosphate = 5-phospho-alpha-D-ribose 1-diphosphate + ATP. The protein operates within amino-acid biosynthesis; L-histidine biosynthesis; L-histidine from 5-phospho-alpha-D-ribose 1-diphosphate: step 1/9. Feedback inhibited by histidine. Its function is as follows. Catalyzes the condensation of ATP and 5-phosphoribose 1-diphosphate to form N'-(5'-phosphoribosyl)-ATP (PR-ATP). Has a crucial role in the pathway because the rate of histidine biosynthesis seems to be controlled primarily by regulation of HisG enzymatic activity. The protein is ATP phosphoribosyltransferase of Shewanella baltica (strain OS155 / ATCC BAA-1091).